The following is a 122-amino-acid chain: Small ribosomal subunit protein uS13 (122 aa).

A disordered region spans residues 95–122 (GLPVRGQRTHTNARTRKGPAKPIAGKKK).

Belongs to the universal ribosomal protein uS13 family. Part of the 30S ribosomal subunit. Forms a loose heterodimer with protein S19. Forms two bridges to the 50S subunit in the 70S ribosome.

Located at the top of the head of the 30S subunit, it contacts several helices of the 16S rRNA. In the 70S ribosome it contacts the 23S rRNA (bridge B1a) and protein L5 of the 50S subunit (bridge B1b), connecting the 2 subunits; these bridges are implicated in subunit movement. Contacts the tRNAs in the A and P-sites. The chain is Small ribosomal subunit protein uS13 from Caulobacter sp. (strain K31).